Reading from the N-terminus, the 329-residue chain is GTP 3',8-cyclase (329 aa).

Residues 8 to 234 enclose the Radical SAM core domain; it reads AFARKFYYLR…QLRQRSDGPA (227 aa). Arg17 is a binding site for GTP. The [4Fe-4S] cluster site is built by Cys24 and Cys28. An S-adenosyl-L-methionine-binding site is contributed by Tyr30. Cys31 serves as a coordination point for [4Fe-4S] cluster. Arg68 contacts GTP. Position 72 (Gly72) interacts with S-adenosyl-L-methionine. GTP is bound at residue Thr99. Ser123 serves as a coordination point for S-adenosyl-L-methionine. Lys160 serves as a coordination point for GTP. Met194 contacts S-adenosyl-L-methionine. Residues Cys257 and Cys260 each coordinate [4Fe-4S] cluster. 262-264 contacts GTP; that stretch reads RLR. Cys274 contacts [4Fe-4S] cluster.

The protein belongs to the radical SAM superfamily. MoaA family. In terms of assembly, monomer and homodimer. Requires [4Fe-4S] cluster as cofactor.

It catalyses the reaction GTP + AH2 + S-adenosyl-L-methionine = (8S)-3',8-cyclo-7,8-dihydroguanosine 5'-triphosphate + 5'-deoxyadenosine + L-methionine + A + H(+). The protein operates within cofactor biosynthesis; molybdopterin biosynthesis. Functionally, catalyzes the cyclization of GTP to (8S)-3',8-cyclo-7,8-dihydroguanosine 5'-triphosphate. In Salmonella paratyphi B (strain ATCC BAA-1250 / SPB7), this protein is GTP 3',8-cyclase.